Here is a 237-residue protein sequence, read N- to C-terminus: Ribosomal RNA small subunit methyltransferase G (237 aa).

The disordered stretch occupies residues 1 to 25; it reads MASRHSPQTAAQPDAADKAQALRLT. Residues 7-21 are compositionally biased toward low complexity; that stretch reads PQTAAQPDAADKAQA. S-adenosyl-L-methionine contacts are provided by glycine 85, phenylalanine 90, and arginine 155.

The protein belongs to the methyltransferase superfamily. RNA methyltransferase RsmG family.

It is found in the cytoplasm. It carries out the reaction guanosine(527) in 16S rRNA + S-adenosyl-L-methionine = N(7)-methylguanosine(527) in 16S rRNA + S-adenosyl-L-homocysteine. Its function is as follows. Specifically methylates the N7 position of guanine in position 527 of 16S rRNA. This Rhodopseudomonas palustris (strain HaA2) protein is Ribosomal RNA small subunit methyltransferase G.